Reading from the N-terminus, the 75-residue chain is Small ribosomal subunit protein bS18 (75 aa).

It belongs to the bacterial ribosomal protein bS18 family. Part of the 30S ribosomal subunit. Forms a tight heterodimer with protein bS6.

Its function is as follows. Binds as a heterodimer with protein bS6 to the central domain of the 16S rRNA, where it helps stabilize the platform of the 30S subunit. In Pseudoalteromonas translucida (strain TAC 125), this protein is Small ribosomal subunit protein bS18.